The chain runs to 157 residues: SsrA-binding protein (157 aa).

The protein belongs to the SmpB family.

It is found in the cytoplasm. Its function is as follows. Required for rescue of stalled ribosomes mediated by trans-translation. Binds to transfer-messenger RNA (tmRNA), required for stable association of tmRNA with ribosomes. tmRNA and SmpB together mimic tRNA shape, replacing the anticodon stem-loop with SmpB. tmRNA is encoded by the ssrA gene; the 2 termini fold to resemble tRNA(Ala) and it encodes a 'tag peptide', a short internal open reading frame. During trans-translation Ala-aminoacylated tmRNA acts like a tRNA, entering the A-site of stalled ribosomes, displacing the stalled mRNA. The ribosome then switches to translate the ORF on the tmRNA; the nascent peptide is terminated with the 'tag peptide' encoded by the tmRNA and targeted for degradation. The ribosome is freed to recommence translation, which seems to be the essential function of trans-translation. The sequence is that of SsrA-binding protein from Clostridium kluyveri (strain NBRC 12016).